The sequence spans 229 residues: Wtf element wtf14 (229 aa).

Basic and acidic residues predominate over residues 1-26 (MENNHHLAKDSLDELNPKRGKGEHET). Residues 1 to 27 (MENNHHLAKDSLDELNPKRGKGEHETQ) are disordered. 4 consecutive transmembrane segments (helical) span residues 71-91 (IPAVLLPVFVINIALFKYLVF), 100-120 (VLFGLGNGGINIFSMWLLLAT), 151-171 (LYAILKLTFVNAFAIPLLMFF), and 188-208 (VIGVMLNVAYFIIEIENPGLF).

The protein belongs to the WTF family.

The protein localises to the endoplasmic reticulum membrane. Functionally, may act in meiotic drive. The chain is Wtf element wtf14 from Schizosaccharomyces pombe (strain 972 / ATCC 24843) (Fission yeast).